The primary structure comprises 680 residues: 1-deoxy-D-xylulose-5-phosphate synthase (680 aa).

Residues 1–17 (MQQSPHSPQSQSLSASA) are compositionally biased toward low complexity. The segment at 1–20 (MQQSPHSPQSQSLSASAVDS) is disordered. Thiamine diphosphate-binding positions include His-113 and 154-156 (GHS). Residue Asp-185 coordinates Mg(2+). Residues 186-187 (GA), Asn-214, Phe-323, and Glu-408 contribute to the thiamine diphosphate site. Asn-214 provides a ligand contact to Mg(2+).

This sequence belongs to the transketolase family. DXPS subfamily. In terms of assembly, homodimer. Mg(2+) is required as a cofactor. It depends on thiamine diphosphate as a cofactor.

The catalysed reaction is D-glyceraldehyde 3-phosphate + pyruvate + H(+) = 1-deoxy-D-xylulose 5-phosphate + CO2. It participates in metabolic intermediate biosynthesis; 1-deoxy-D-xylulose 5-phosphate biosynthesis; 1-deoxy-D-xylulose 5-phosphate from D-glyceraldehyde 3-phosphate and pyruvate: step 1/1. In terms of biological role, catalyzes the acyloin condensation reaction between C atoms 2 and 3 of pyruvate and glyceraldehyde 3-phosphate to yield 1-deoxy-D-xylulose-5-phosphate (DXP). The chain is 1-deoxy-D-xylulose-5-phosphate synthase from Psychrobacter cryohalolentis (strain ATCC BAA-1226 / DSM 17306 / VKM B-2378 / K5).